Here is a 175-residue protein sequence, read N- to C-terminus: Bcl-2-related protein A1 (175 aa).

It belongs to the Bcl-2 family. As to quaternary structure, interacts directly with BCL2L11/BIM, BAK1, BID, BMF and BBC3. Interacts directly with PMAIP1. Interacts with BOP. Interacts with ING4. Interacts with UBQLN4.

The protein localises to the cytoplasm. Functionally, retards apoptosis induced by IL-3 deprivation. May function in the response of hemopoietic cells to external signals and in maintaining endothelial survival during infection. Can inhibit apoptosis induced by serum starvation in the mammary epithelial cell line HC11. In Bos taurus (Bovine), this protein is Bcl-2-related protein A1 (BCL2A1).